A 466-amino-acid chain; its full sequence is MSNNTDLSPVHVIGGGLAGSEAAWQIAQAGVPVVLHEMRPVRGTDAHKTEQLAELVCSNSFRSDDAETNAVGVLHAEMRLAGSLIMACADAHQVPAGGALAVDREGFSQAVTARLEAHPLITIEREEITGLPPTEWGTTIIATGPLTAPSLAEAIAAETDADALAFFDAIAPIIHFDSINMDVCWFQSRYDKVGPGGTGKDYINCPMDKEQYEAFVAALIEGDKTDFKEWEGTPYFDGCLPIEVMAERGPETLRHGPMKPMGLTNAHNPTVKPYAVVQLRQDNALGTLYNMVGFQTKLKYGSQTGIFKMIPGLENAEFARLGGLHRNTYLNSPVLLDNVLRLKSRQTLRFAGQVTGCEGYVESSAIGLLAGRFTAAEKLSQAAVPPPPTTAFGALLGHITGGHIVTNDEPGKRSFQPMNVNFGLFPPVDVPKPEGKRLRGKEKTIAKKRALSARALADCRNWLSLY.

Gly-14–Gly-19 is an FAD binding site.

This sequence belongs to the MnmG family. TrmFO subfamily. It depends on FAD as a cofactor.

Its subcellular location is the cytoplasm. The catalysed reaction is uridine(54) in tRNA + (6R)-5,10-methylene-5,6,7,8-tetrahydrofolate + NADH + H(+) = 5-methyluridine(54) in tRNA + (6S)-5,6,7,8-tetrahydrofolate + NAD(+). It carries out the reaction uridine(54) in tRNA + (6R)-5,10-methylene-5,6,7,8-tetrahydrofolate + NADPH + H(+) = 5-methyluridine(54) in tRNA + (6S)-5,6,7,8-tetrahydrofolate + NADP(+). Its function is as follows. Catalyzes the folate-dependent formation of 5-methyl-uridine at position 54 (M-5-U54) in all tRNAs. The sequence is that of Methylenetetrahydrofolate--tRNA-(uracil-5-)-methyltransferase TrmFO from Brucella abortus (strain 2308).